The chain runs to 1227 residues: Pentatricopeptide repeat-containing protein At5g15280, mitochondrial (1227 aa).

The N-terminal 31 residues, 1 to 31, are a transit peptide targeting the mitochondrion; that stretch reads MLNLLSISSSSRLRFLNKVSSLTYHYSFAFF. 28 PPR repeats span residues 146-180, 182-216, 217-251, 255-289, 290-320, 322-356, 357-391, 392-426, 427-461, 527-561, 562-597, 598-632, 633-667, 668-698, 703-737, 738-772, 773-800, 802-836, 837-871, 872-906, 908-942, 943-977, 978-1012, 1014-1044, 1047-1081, 1082-1116, 1117-1151, and 1152-1186; these read LPQACEIMASMLIREGMVKEVELLLMEMERHGDTM, NEGIFCDLIGKYVDDFDSRKAVMLFDWMRRKGLVP, LTSCYQILIDQLVRVHRTESAYRICLDWVETRAEL, NIDSIGKVIELLCLDQKVQEARVLARKLVALGCIL, NSSIYSKITIGYNEKQDFEDLLSFIGEVKYE, DVFVGNRILHSLCRRFGSERAYVYMEELEHLGFKQ, DEVTFGILIGWCCYEGDIKRAVLYLSEIMSKGYKP, DVYSYNAILSGLFRKGLWQHTHCILDEMKENGMML, SLSTFKIMVTGYCKARQFEEAKRIVNKMFGYGLIE, VLPEFNSLIVRASEDGDLQTALRLLDEMARWGQKL, SRRSFAVLMRSLCASRAHLRVSISLLEKWPKLAYQL, DGETLNFLVQEYCKKGFSRHSKLIFHKMVQMHHPI, DNVTYTSLIRCFCKKETLNDLLNVWGAAQNDNWLP, DLNDCGDLWNCLVRKGLVEEVVQLFERVFIS, QSEACRIFVEKLTVLGFSCIAHSVVKRLEGEGCIV, EQEVYNHLIKGLCTEKKDSAAFAILDEMLDKKHIP, SLGSCLMLIPRLCRANKAGTAFNLAEQI, SSYVHYALIKGLSLAGKMLDAENQLRIMLSNGLSS, YNKIYNVMFQGYCKGNNWMKVEEVLGLMVRKNIIC, SVKSYREYVRKMCLEPQSLSAISLKEFLLLGESNP, GVIIYNMLIFYMFRAKNHLEVNKVLLEMQGRGVLP, DETTFNFLVHGYSSSADYSSSLRYLSAMISKGMKP, NNRSLRAVTSSLCDNGDVKKALDLWQVMESKGWNL, SSVVQTKIVETLISKGEIPKAEDFLTRVTRN, MAPNYDNIIKKLSDRGNLDIAVHLLNTMLKNQSIP, GSSSYDSVINGLLRYNQLDKAMDFHTEMVELGLSP, SISTWSGLVHKFCEACQVLESERLIKSMVGLGESP, and SQEMFKTVIDRFRVEKNTVKASEMMEMMQKCGYEV.

The protein belongs to the PPR family. P subfamily.

It localises to the mitochondrion. The protein is Pentatricopeptide repeat-containing protein At5g15280, mitochondrial of Arabidopsis thaliana (Mouse-ear cress).